Here is a 473-residue protein sequence, read N- to C-terminus: Protein nucleotidyltransferase YdiU (473 aa).

Glycine 79, glycine 81, arginine 82, lysine 102, aspartate 114, glycine 115, arginine 165, and arginine 172 together coordinate ATP. Aspartate 241 serves as the catalytic Proton acceptor. Positions 242 and 251 each coordinate Mg(2+). Aspartate 251 lines the ATP pocket.

The protein belongs to the SELO family. Mg(2+) is required as a cofactor. The cofactor is Mn(2+).

The catalysed reaction is L-seryl-[protein] + ATP = 3-O-(5'-adenylyl)-L-seryl-[protein] + diphosphate. It catalyses the reaction L-threonyl-[protein] + ATP = 3-O-(5'-adenylyl)-L-threonyl-[protein] + diphosphate. The enzyme catalyses L-tyrosyl-[protein] + ATP = O-(5'-adenylyl)-L-tyrosyl-[protein] + diphosphate. It carries out the reaction L-histidyl-[protein] + UTP = N(tele)-(5'-uridylyl)-L-histidyl-[protein] + diphosphate. The catalysed reaction is L-seryl-[protein] + UTP = O-(5'-uridylyl)-L-seryl-[protein] + diphosphate. It catalyses the reaction L-tyrosyl-[protein] + UTP = O-(5'-uridylyl)-L-tyrosyl-[protein] + diphosphate. Functionally, nucleotidyltransferase involved in the post-translational modification of proteins. It can catalyze the addition of adenosine monophosphate (AMP) or uridine monophosphate (UMP) to a protein, resulting in modifications known as AMPylation and UMPylation. This Marinomonas sp. (strain MWYL1) protein is Protein nucleotidyltransferase YdiU.